The following is a 252-amino-acid chain: UPF0246 protein LJ_0535 (252 aa).

This sequence belongs to the UPF0246 family.

The polypeptide is UPF0246 protein LJ_0535 (Lactobacillus johnsonii (strain CNCM I-12250 / La1 / NCC 533)).